A 331-amino-acid chain; its full sequence is Ketol-acid reductoisomerase (NADP(+)) (331 aa).

The KARI N-terminal Rossmann domain occupies 2–181 (LEKYYDKDAD…GATRAVVFET (180 aa)). NADP(+) is bound by residues 25–28 (YGSQ), Arg48, Ser52, and 82–85 (DEQQ). His107 is a catalytic residue. Gly133 serves as a coordination point for NADP(+). A KARI C-terminal knotted domain is found at 182–327 (SFREETETDL…KEIRATMPQF (146 aa)). Mg(2+) is bound by residues Asp190, Glu194, Glu226, and Glu230. Residue Ser251 participates in substrate binding.

The protein belongs to the ketol-acid reductoisomerase family. Requires Mg(2+) as cofactor.

It catalyses the reaction (2R)-2,3-dihydroxy-3-methylbutanoate + NADP(+) = (2S)-2-acetolactate + NADPH + H(+). The enzyme catalyses (2R,3R)-2,3-dihydroxy-3-methylpentanoate + NADP(+) = (S)-2-ethyl-2-hydroxy-3-oxobutanoate + NADPH + H(+). Its pathway is amino-acid biosynthesis; L-isoleucine biosynthesis; L-isoleucine from 2-oxobutanoate: step 2/4. The protein operates within amino-acid biosynthesis; L-valine biosynthesis; L-valine from pyruvate: step 2/4. Involved in the biosynthesis of branched-chain amino acids (BCAA). Catalyzes an alkyl-migration followed by a ketol-acid reduction of (S)-2-acetolactate (S2AL) to yield (R)-2,3-dihydroxy-isovalerate. In the isomerase reaction, S2AL is rearranged via a Mg-dependent methyl migration to produce 3-hydroxy-3-methyl-2-ketobutyrate (HMKB). In the reductase reaction, this 2-ketoacid undergoes a metal-dependent reduction by NADPH to yield (R)-2,3-dihydroxy-isovalerate. The polypeptide is Ketol-acid reductoisomerase (NADP(+)) (Methanospirillum hungatei JF-1 (strain ATCC 27890 / DSM 864 / NBRC 100397 / JF-1)).